The sequence spans 539 residues: Beta-agarase A (539 aa).

Positions 1 to 19 are cleaved as a signal peptide; it reads MKKNYLLLYFIFLLCGSIA. The GH16 domain maps to 21–289; sequence QDWNGIPVPA…WIRVYKPVAV (269 aa). Residues tryptophan 73, 82–92, 96–98, and glutamate 144 each bind substrate; these read NAPQAWTNGSQ and QAQ. Glutamate 147 functions as the Nucleophile in the catalytic mechanism. Glutamate 152 functions as the Proton donor in the catalytic mechanism. 2 residues coordinate substrate: arginine 176 and aspartate 271. A disordered region spans residues 332 to 353; sequence WANTNDIGSRDRGASNGRNNIN.

Belongs to the glycosyl hydrolase 16 family. In terms of assembly, monomer. Proteolytically cleaved into mature beta-agarase A catalytic chain (AgaAc).

The protein resides in the secreted. The catalysed reaction is Hydrolysis of (1-&gt;4)-beta-D-galactosidic linkages in agarose, giving the tetramer as the predominant product.. Functionally, cleaves the beta-1,4-linkages between beta-D-galactose and alpha-L-3,6-anhydro-galactose residues in agarose. Cleaves agarose in a random manner with retention of the anomeric-bond configuration, producing beta-anomers that give rise progressively to alpha-anomers when mutarotation takes place. This chain is Beta-agarase A (agaA), found in Zobellia galactanivorans (strain DSM 12802 / CCUG 47099 / CIP 106680 / NCIMB 13871 / Dsij).